We begin with the raw amino-acid sequence, 349 residues long: Methylthioribose-1-phosphate isomerase (349 aa).

Substrate is bound by residues 49–51 (RGA), arginine 93, and glutamine 201. The active-site Proton donor is the aspartate 242. 252 to 253 (NK) is a substrate binding site.

This sequence belongs to the EIF-2B alpha/beta/delta subunits family. MtnA subfamily.

It carries out the reaction 5-(methylsulfanyl)-alpha-D-ribose 1-phosphate = 5-(methylsulfanyl)-D-ribulose 1-phosphate. Its pathway is amino-acid biosynthesis; L-methionine biosynthesis via salvage pathway; L-methionine from S-methyl-5-thio-alpha-D-ribose 1-phosphate: step 1/6. Functionally, catalyzes the interconversion of methylthioribose-1-phosphate (MTR-1-P) into methylthioribulose-1-phosphate (MTRu-1-P). The protein is Methylthioribose-1-phosphate isomerase of Petrotoga mobilis (strain DSM 10674 / SJ95).